A 340-amino-acid chain; its full sequence is GTPase Obg (340 aa).

An Obg domain is found at 1-158; sequence MSFIDEAKVY…KWIILKLKII (158 aa). Residues 159-325 form the OBG-type G domain; the sequence is SDVGIIGLPN…LSILIKHINK (167 aa). GTP-binding positions include 165–172, 190–194, 211–214, 278–281, and 306–308; these read GLPNAGKS, FTTLE, DIPG, NKCD, and SSI. The Mg(2+) site is built by Ser172 and Thr192.

It belongs to the TRAFAC class OBG-HflX-like GTPase superfamily. OBG GTPase family. In terms of assembly, monomer. It depends on Mg(2+) as a cofactor.

The protein localises to the cytoplasm. Its function is as follows. An essential GTPase which binds GTP, GDP and possibly (p)ppGpp with moderate affinity, with high nucleotide exchange rates and a fairly low GTP hydrolysis rate. Plays a role in control of the cell cycle, stress response, ribosome biogenesis and in those bacteria that undergo differentiation, in morphogenesis control. In Ehrlichia ruminantium (strain Gardel), this protein is GTPase Obg.